Reading from the N-terminus, the 96-residue chain is Secretoglobin family 2B member 2 (96 aa).

Positions 1–23 (MRVTSATCALLLALICSVQLGDA) are cleaved as a signal peptide.

This sequence belongs to the secretoglobin family.

It localises to the secreted. This chain is Secretoglobin family 2B member 2 (SCGB2B2), found in Homo sapiens (Human).